The chain runs to 367 residues: Alanine racemase (367 aa).

The Proton acceptor; specific for D-alanine role is filled by lysine 35. Residue lysine 35 is modified to N6-(pyridoxal phosphate)lysine. Position 130 (arginine 130) interacts with substrate. Residue tyrosine 258 is the Proton acceptor; specific for L-alanine of the active site. Residue methionine 306 participates in substrate binding.

This sequence belongs to the alanine racemase family. It depends on pyridoxal 5'-phosphate as a cofactor.

The enzyme catalyses L-alanine = D-alanine. Its pathway is amino-acid biosynthesis; D-alanine biosynthesis; D-alanine from L-alanine: step 1/1. Catalyzes the interconversion of L-alanine and D-alanine. May also act on other amino acids. This chain is Alanine racemase (alr), found in Acinetobacter baumannii (strain SDF).